The following is a 954-amino-acid chain: Glycine dehydrogenase (decarboxylating) (954 aa).

Lysine 704 carries the N6-(pyridoxal phosphate)lysine modification.

Belongs to the GcvP family. As to quaternary structure, the glycine cleavage system is composed of four proteins: P, T, L and H. Pyridoxal 5'-phosphate serves as cofactor.

It carries out the reaction N(6)-[(R)-lipoyl]-L-lysyl-[glycine-cleavage complex H protein] + glycine + H(+) = N(6)-[(R)-S(8)-aminomethyldihydrolipoyl]-L-lysyl-[glycine-cleavage complex H protein] + CO2. In terms of biological role, the glycine cleavage system catalyzes the degradation of glycine. The P protein binds the alpha-amino group of glycine through its pyridoxal phosphate cofactor; CO(2) is released and the remaining methylamine moiety is then transferred to the lipoamide cofactor of the H protein. In Vibrio cholerae serotype O1 (strain ATCC 39541 / Classical Ogawa 395 / O395), this protein is Glycine dehydrogenase (decarboxylating).